The chain runs to 203 residues: ATP-dependent Clp protease proteolytic subunit 2 (203 aa).

Ser-101 (nucleophile) is an active-site residue. Residue His-126 is part of the active site.

This sequence belongs to the peptidase S14 family. Fourteen ClpP subunits assemble into 2 heptameric rings which stack back to back to give a disk-like structure with a central cavity, resembling the structure of eukaryotic proteasomes.

Its subcellular location is the cytoplasm. It catalyses the reaction Hydrolysis of proteins to small peptides in the presence of ATP and magnesium. alpha-casein is the usual test substrate. In the absence of ATP, only oligopeptides shorter than five residues are hydrolyzed (such as succinyl-Leu-Tyr-|-NHMec, and Leu-Tyr-Leu-|-Tyr-Trp, in which cleavage of the -Tyr-|-Leu- and -Tyr-|-Trp bonds also occurs).. In terms of biological role, cleaves peptides in various proteins in a process that requires ATP hydrolysis. Has a chymotrypsin-like activity. Plays a major role in the degradation of misfolded proteins. This chain is ATP-dependent Clp protease proteolytic subunit 2, found in Prochlorococcus marinus (strain MIT 9312).